A 323-amino-acid chain; its full sequence is CYFIP-related Rac1 interactor A (323 aa).

This sequence belongs to the CYRI family. Interacts with RAC1 (GTP-bound form preferentially).

It localises to the membrane. May negatively regulate RAC1 signaling and RAC1-driven cytoskeletal remodeling. May regulate chemotaxis, cell migration and epithelial polarization by controlling the polarity, plasticity, duration and extent of protrusions. The polypeptide is CYFIP-related Rac1 interactor A (CYRIA) (Bos taurus (Bovine)).